The primary structure comprises 286 residues: E3 SUMO-protein ligase K-bZIP (286 aa).

Disordered regions lie at residues Met1 to Glu22 and Trp106 to Arg130.

Interacts with host HDAC1 and HDAC2, these interactions suppress HDAC activities. Interacts with protein ORF57. Interacts with protein vPK. Sumoylated.

The protein operates within protein modification; protein sumoylation. Its function is as follows. SUMO E3 ligase that plays a role in viral gene regulation and is essential for viral reactivation. Disrupts host G1 cell cycle control thus allowing viral transcription and translation to proceed at the early stages of infection. Catalyzes its own SUMO modification as well as that of its interacting partners such as host TP53 and RB1. Regulates viral gene expression and reactivation and may mediate the SUMOylation of viral promoters in the low methylated 'Lys-9' histone H3 (H3K9me) region which results in a diminution of viral gene expression after reactivation. SUMOylates also host histone lysine demethylase 4A/KDM4A, an essential step for complete enrichment of SUMO-2/3 on the viral genome during viral transactivation and reactivation. In Human herpesvirus 8 type P (isolate GK18) (HHV-8), this protein is E3 SUMO-protein ligase K-bZIP (K8).